The following is a 194-amino-acid chain: Peptidyl-tRNA hydrolase (194 aa).

Tyrosine 17 contacts tRNA. The active-site Proton acceptor is histidine 22. TRNA contacts are provided by tyrosine 68, asparagine 70, and asparagine 116.

Belongs to the PTH family. Monomer.

The protein localises to the cytoplasm. The enzyme catalyses an N-acyl-L-alpha-aminoacyl-tRNA + H2O = an N-acyl-L-amino acid + a tRNA + H(+). Functionally, hydrolyzes ribosome-free peptidyl-tRNAs (with 1 or more amino acids incorporated), which drop off the ribosome during protein synthesis, or as a result of ribosome stalling. Its function is as follows. Catalyzes the release of premature peptidyl moieties from peptidyl-tRNA molecules trapped in stalled 50S ribosomal subunits, and thus maintains levels of free tRNAs and 50S ribosomes. This Pseudomonas putida (strain GB-1) protein is Peptidyl-tRNA hydrolase.